Here is a 349-residue protein sequence, read N- to C-terminus: S-adenosylmethionine:tRNA ribosyltransferase-isomerase (349 aa).

The protein belongs to the QueA family. In terms of assembly, monomer.

Its subcellular location is the cytoplasm. It carries out the reaction 7-aminomethyl-7-carbaguanosine(34) in tRNA + S-adenosyl-L-methionine = epoxyqueuosine(34) in tRNA + adenine + L-methionine + 2 H(+). It functions in the pathway tRNA modification; tRNA-queuosine biosynthesis. Transfers and isomerizes the ribose moiety from AdoMet to the 7-aminomethyl group of 7-deazaguanine (preQ1-tRNA) to give epoxyqueuosine (oQ-tRNA). The chain is S-adenosylmethionine:tRNA ribosyltransferase-isomerase from Parabacteroides distasonis (strain ATCC 8503 / DSM 20701 / CIP 104284 / JCM 5825 / NCTC 11152).